The chain runs to 737 residues: Phosphoribosylformylglycinamidine synthase subunit PurL (737 aa).

H50 is a catalytic residue. Residues Y53 and K92 each contribute to the ATP site. E94 lines the Mg(2+) pocket. Residues 95–98 (SHNH) and R117 each bind substrate. Catalysis depends on H96, which acts as the Proton acceptor. Residue D118 participates in Mg(2+) binding. Residue Q241 participates in substrate binding. D269 serves as a coordination point for Mg(2+). 313–315 (ESQ) is a binding site for substrate. ATP-binding residues include D494 and G531. Residue N532 coordinates Mg(2+). Substrate is bound at residue S534.

Belongs to the FGAMS family. As to quaternary structure, monomer. Part of the FGAM synthase complex composed of 1 PurL, 1 PurQ and 2 PurS subunits.

The protein localises to the cytoplasm. It carries out the reaction N(2)-formyl-N(1)-(5-phospho-beta-D-ribosyl)glycinamide + L-glutamine + ATP + H2O = 2-formamido-N(1)-(5-O-phospho-beta-D-ribosyl)acetamidine + L-glutamate + ADP + phosphate + H(+). Its pathway is purine metabolism; IMP biosynthesis via de novo pathway; 5-amino-1-(5-phospho-D-ribosyl)imidazole from N(2)-formyl-N(1)-(5-phospho-D-ribosyl)glycinamide: step 1/2. Its function is as follows. Part of the phosphoribosylformylglycinamidine synthase complex involved in the purines biosynthetic pathway. Catalyzes the ATP-dependent conversion of formylglycinamide ribonucleotide (FGAR) and glutamine to yield formylglycinamidine ribonucleotide (FGAM) and glutamate. The FGAM synthase complex is composed of three subunits. PurQ produces an ammonia molecule by converting glutamine to glutamate. PurL transfers the ammonia molecule to FGAR to form FGAM in an ATP-dependent manner. PurS interacts with PurQ and PurL and is thought to assist in the transfer of the ammonia molecule from PurQ to PurL. The protein is Phosphoribosylformylglycinamidine synthase subunit PurL of Nitrobacter winogradskyi (strain ATCC 25391 / DSM 10237 / CIP 104748 / NCIMB 11846 / Nb-255).